Reading from the N-terminus, the 342-residue chain is N-acetyl-gamma-glutamyl-phosphate reductase (342 aa).

Cys149 is an active-site residue.

This sequence belongs to the NAGSA dehydrogenase family. Type 1 subfamily.

The protein localises to the cytoplasm. The enzyme catalyses N-acetyl-L-glutamate 5-semialdehyde + phosphate + NADP(+) = N-acetyl-L-glutamyl 5-phosphate + NADPH + H(+). Its pathway is amino-acid biosynthesis; L-arginine biosynthesis; N(2)-acetyl-L-ornithine from L-glutamate: step 3/4. In terms of biological role, catalyzes the NADPH-dependent reduction of N-acetyl-5-glutamyl phosphate to yield N-acetyl-L-glutamate 5-semialdehyde. The chain is N-acetyl-gamma-glutamyl-phosphate reductase from Cereibacter sphaeroides (strain ATCC 17025 / ATH 2.4.3) (Rhodobacter sphaeroides).